The following is a 316-amino-acid chain: Probable inactive poly [ADP-ribose] polymerase SRO4 (316 aa).

A disordered region spans residues 1 to 28 (MDYSKTEETPINEEQGSTNSSESRSNEE). Over residues 14 to 23 (EQGSTNSSES) the composition is skewed to low complexity. The PARP catalytic domain occupies 28-255 (ELFSDCDQQH…KSPWISFPVL (228 aa)). An RST domain is found at 243–314 (KNPKSPWISF…IKSVGQKVHK (72 aa)).

It localises to the nucleus. In terms of biological role, probable inactive ADP-ribosyltransferase that may be involved in stress and developmental responses. The protein is Probable inactive poly [ADP-ribose] polymerase SRO4 (SRO4) of Arabidopsis thaliana (Mouse-ear cress).